Here is a 144-residue protein sequence, read N- to C-terminus: Large ribosomal subunit protein uL16 (144 aa).

The protein belongs to the universal ribosomal protein uL16 family. As to quaternary structure, part of the 50S ribosomal subunit.

Functionally, binds 23S rRNA and is also seen to make contacts with the A and possibly P site tRNAs. This Halothermothrix orenii (strain H 168 / OCM 544 / DSM 9562) protein is Large ribosomal subunit protein uL16.